We begin with the raw amino-acid sequence, 1323 residues long: ABC transporter gloK (1323 aa).

The next 7 helical transmembrane spans lie at 6–26 (AIAS…TLEA), 102–122 (PHAL…AGIL), 138–158 (VAYG…VMST), 217–237 (IWAS…RLGV), 240–260 (VAAV…VFGF), 325–345 (LLVG…VFAF), and 359–379 (PLLA…GQAV). The ABC transmembrane type-1 1 domain occupies 142–380 (LIAAYAIVYI…IFSLLGQAVS (239 aa)). Residues 471 to 697 (IRDCSACWSK…SSYLESLGTR (227 aa)) enclose the ABC transporter 1 domain. Residue 503-510 (GPIGSGKS) coordinates ATP. 7 helical membrane-spanning segments follow: residues 748–768 (GWVT…GLVF), 795–815 (YALW…WLMI), 821–841 (AAIQ…LVYF), 859–879 (LIDM…LSCI), 891–910 (YVAA…QLFY), 976–996 (LNLT…SIAL), and 1006–1026 (IGVA…LVYT). Positions 752 to 1031 (WWVFVLLCSG…TLVYTWTSLE (280 aa)) constitute an ABC transmembrane type-1 2 domain. The ABC transporter 2 domain occupies 1069–1300 (IRFQSVSAAY…PSFFASLLKA (232 aa)). Residue 1103 to 1110 (GRTGSGKS) coordinates ATP.

Belongs to the ABC transporter superfamily. ABCC family. Conjugate transporter (TC 3.A.1.208) subfamily.

The protein resides in the cell membrane. 3-isopropylmalate dehydratase large subunit; part of the gene cluster that mediates the biosynthesis of pneumocandins, lipohexapeptides of the echinocandin family that prevent fungal cell wall formation by non-competitive inhibition of beta-1,3-glucan synthase. Possibly secretes antifungal pneumocandins, thus avoiding of intracellular accumulation and ameliorating the toxicity to the producing cells. The chain is ABC transporter gloK from Glarea lozoyensis (strain ATCC 20868 / MF5171).